We begin with the raw amino-acid sequence, 37 residues long: Dolichyl-diphosphooligosaccharide--protein glycosyltransferase subunit 4A (37 aa).

Topologically, residues 1–7 (MIDDQDL) are lumenal. A helical transmembrane segment spans residues 8–28 (GFIANFLGIFIFALVIAYHYV). Over 29–37 (TADPKYEAT) the chain is Cytoplasmic.

It belongs to the OST4 family. In terms of assembly, component of the oligosaccharyltransferase (OST) complex.

The protein localises to the endoplasmic reticulum membrane. Its function is as follows. Subunit of the oligosaccharyl transferase (OST) complex that catalyzes the initial transfer of a defined glycan (Glc(3)Man(9)GlcNAc(2) in eukaryotes) from the lipid carrier dolichol-pyrophosphate to an asparagine residue within an Asn-X-Ser/Thr consensus motif in nascent polypeptide chains, the first step in protein N-glycosylation. N-glycosylation occurs cotranslationally and the complex associates with the Sec61 complex at the channel-forming translocon complex that mediates protein translocation across the endoplasmic reticulum (ER). All subunits are required for a maximal enzyme activity. The chain is Dolichyl-diphosphooligosaccharide--protein glycosyltransferase subunit 4A (OST4A) from Arabidopsis thaliana (Mouse-ear cress).